Consider the following 468-residue polypeptide: Citrate synthase, mitochondrial (468 aa).

A mitochondrion-targeting transit peptide spans 1-30 (MSFLSISRLAPRLLSSKNAACVVVAARNAS). Catalysis depends on residues H303 and H349. Oxaloacetate is bound at residue R358. Residue D404 is part of the active site. The oxaloacetate site is built by R430 and R450.

The protein belongs to the citrate synthase family. Homodimer.

Its subcellular location is the mitochondrion matrix. It catalyses the reaction oxaloacetate + acetyl-CoA + H2O = citrate + CoA + H(+). It functions in the pathway carbohydrate metabolism; tricarboxylic acid cycle; isocitrate from oxaloacetate: step 1/2. Key enzyme of the Krebs tricarboxylic acid cycle which catalyzes the synthesis of citrate from acetyl coenzyme A and oxaloacetate. This Danio rerio (Zebrafish) protein is Citrate synthase, mitochondrial (cs).